Reading from the N-terminus, the 408-residue chain is F-box A protein 155 (408 aa).

The disordered stretch occupies residues 1-22 (MSDRGSDQSSSSSDSAQHIPPK).

It belongs to the FTH family.

The sequence is that of F-box A protein 155 (fbxa-155) from Caenorhabditis elegans.